A 440-amino-acid polypeptide reads, in one-letter code: Xylose isomerase (440 aa).

Residues His-100 and Asp-103 contribute to the active site. The Mg(2+) site is built by Glu-231, Glu-267, His-270, Asp-295, Asp-306, Asp-308, and Asp-338.

It belongs to the xylose isomerase family. In terms of assembly, homotetramer. Mg(2+) is required as a cofactor.

Its subcellular location is the cytoplasm. It catalyses the reaction alpha-D-xylose = alpha-D-xylulofuranose. In Paraburkholderia phytofirmans (strain DSM 17436 / LMG 22146 / PsJN) (Burkholderia phytofirmans), this protein is Xylose isomerase.